Consider the following 141-residue polypeptide: uncharacterized protein (141 aa).

4 helical membrane-spanning segments follow: residues 7-24, 39-56, 69-91, and 116-138; these read YRIP…FLSP, FLKF…HRGI, FYLI…ILGF, and FFIL…SSFI.

It is found in the cell membrane. This is an uncharacterized protein from Aquifex aeolicus (strain VF5).